We begin with the raw amino-acid sequence, 337 residues long: Aspartate carbamoyltransferase catalytic subunit (337 aa).

The carbamoyl phosphate site is built by Arg-59 and Thr-60. Residue Lys-87 coordinates L-aspartate. The carbamoyl phosphate site is built by Arg-109, His-142, and Gln-145. Residues Arg-182 and Arg-253 each coordinate L-aspartate. Residues Gly-294 and Pro-295 each coordinate carbamoyl phosphate.

The protein belongs to the aspartate/ornithine carbamoyltransferase superfamily. ATCase family. Heterododecamer (2C3:3R2) of six catalytic PyrB chains organized as two trimers (C3), and six regulatory PyrI chains organized as three dimers (R2).

It catalyses the reaction carbamoyl phosphate + L-aspartate = N-carbamoyl-L-aspartate + phosphate + H(+). The protein operates within pyrimidine metabolism; UMP biosynthesis via de novo pathway; (S)-dihydroorotate from bicarbonate: step 2/3. Functionally, catalyzes the condensation of carbamoyl phosphate and aspartate to form carbamoyl aspartate and inorganic phosphate, the committed step in the de novo pyrimidine nucleotide biosynthesis pathway. This chain is Aspartate carbamoyltransferase catalytic subunit, found in Prochlorococcus marinus (strain MIT 9211).